The chain runs to 293 residues: Notch homolog 2 N-terminal-like protein C (293 aa).

4 consecutive EGF-like domains span residues 42 to 81 (PPRM…EYCQ), 82 to 120 (HRDP…EDCQ), 123 to 161 (TSHP…KECQ), and 162 to 198 (WTDA…QKCE). Disulfide bonds link Cys-46-Cys-59, Cys-53-Cys-69, Cys-71-Cys-80, Cys-86-Cys-97, Cys-91-Cys-108, Cys-110-Cys-119, Cys-127-Cys-139, Cys-133-Cys-149, Cys-151-Cys-160, Cys-166-Cys-177, Cys-171-Cys-186, Cys-188-Cys-197, Cys-204-Cys-216, Cys-210-Cys-225, Cys-227-Cys-236, Cys-243-Cys-254, and Cys-248-Cys-264. N-linked (GlcNAc...) asparagine glycosylation occurs at Asn-64. An N-linked (GlcNAc...) asparagine glycan is attached at Asn-173. One can recognise an EGF-like 5; calcium-binding domain in the interval 200-237 (DVNECDIPGHCQHGGTCLNLPGSYQCQCLQGFTGQYCD). An EGF-like 6 domain is found at 239 to 276 (LYVPCAPSPCVNGGTCRQTGDFTFECNCLPETVRRGTE).

The protein belongs to the NOTCH family. Interacts with NOTCH2. Interacts with DLL1; the interaction is direct. Expressed in radial glia neural stem cells during cortical development.

It localises to the secreted. Human-specific protein that promotes neural progenitor proliferation and evolutionary expansion of the brain neocortex by regulating the Notch signaling pathway. Able to promote neural progenitor self-renewal, possibly by down-regulating neuronal differentiation genes, thereby delaying the differentiation of neuronal progenitors and leading to an overall final increase in neuronal production. Acts by enhancing the Notch signaling pathway via two different mechanisms that probably work in parallel to reach the same effect. Enhances Notch signaling pathway in a non-cell-autonomous manner via direct interaction with NOTCH2. Also promotes Notch signaling pathway in a cell-autonomous manner through inhibition of cis DLL1-NOTCH2 interactions, which promotes neuronal differentiation. The chain is Notch homolog 2 N-terminal-like protein C from Homo sapiens (Human).